Here is a 453-residue protein sequence, read N- to C-terminus: uncharacterized protein (453 aa).

The TRAM domain occupies 5–63 (LLKKNQSIELTIEDLTHDGSGVGKIDGYPFFIPNTLPGEKVTAKIIKLNKNYGFARMEN). Residues Cys76, Cys82, Cys85, and Cys162 each contribute to the [4Fe-4S] cluster site. S-adenosyl-L-methionine is bound by residues Gln285, Tyr314, Glu335, and Asp383. Cys410 functions as the Nucleophile in the catalytic mechanism.

This sequence belongs to the class I-like SAM-binding methyltransferase superfamily. RNA M5U methyltransferase family.

This is an uncharacterized protein from Listeria monocytogenes serovar 1/2a (strain ATCC BAA-679 / EGD-e).